The chain runs to 436 residues: Prenyltransferase nscD (436 aa).

It belongs to the tryptophan dimethylallyltransferase family.

The protein operates within secondary metabolite biosynthesis. Prenyltransferase; part of the gene cluster that mediates the biosynthesis of neosartoricin B, a prenylated anthracenone that probably exhibits T-cell antiproliferative activity, suggestive of a physiological role as an immunosuppressive agent. The non-reducing polyketide synthase nscA probably synthesizes and cyclizes the decaketide backbone. The hydrolase nscB then mediates the product release through hydrolysis followed by spontaneous decarboxylation. The prenyltransferase nscD catalyzes the addition of the dimethylallyl group to the aromatic C5. The FAD-dependent monooxygenase nscC is then responsible for the stereospecific hydroxylation at C2. Neosartoricin B can be converted into two additional compounds neosartoricins C and D. Neosartoricin C is a spirocyclic compound that is cyclized through the attack of C3 hydroxyl on C14, followed by dehydration. On the other hand, neosartoricin D is a further cyclized compound in which attack of C2 on C14 in neosartoricin C results in the formation of the acetal-containing dioxabicyclo-octanone ring. Both of these compounds are novel and possibly represent related metabolites of the gene cluster. The protein is Prenyltransferase nscD of Trichophyton rubrum (strain ATCC MYA-4607 / CBS 118892) (Athlete's foot fungus).